We begin with the raw amino-acid sequence, 74 residues long: Conotoxin Vc7.2 (74 aa).

Positions 1-22 (MNTAGRLLLLCLVLGLVFESLG) are cleaved as a signal peptide. The propeptide occupies 23 to 49 (IPVADDLEADRDTDPDEKDPSVHNYWR). Cystine bridges form between Cys53–Cys63, Cys58–Cys68, and Cys62–Cys73.

Expressed by the venom duct.

Its subcellular location is the secreted. Its function is as follows. Probable toxin with unknown function. Does not produce any changes in intracellular calcium levels in mouse dorsal root ganglion cells. In vivo, does not produce behavioral changes when intracranially injected into mice. In Conus victoriae (Queen Victoria cone), this protein is Conotoxin Vc7.2.